A 346-amino-acid polypeptide reads, in one-letter code: MTTNTVTLQTAHIVSLGDIEEAKASIKPFIRRTPLIKSMYLSQSITKGNVFLKLENMQFTGSFKFRGASNKINHLTDEQKEKGIIAASAGNHAQGVALTAKLLGIDATIVMPETAPQAKQQATKGYGAKVILKGKNFNETRLYMEELAKENGMTIVHPYDDKFVMAGQGTIGLEILDDIWNVNTVIVPVGGGGLIAGIATALKSFNPSIHIIGVQSENVHGMAESFYKRDLTEHRVDSTIADGCDVKVPGEQTYEVVKHLVDEFILVTEEEIEHAMKDLMQRAKIITEGAGALPTAAILSGKINNKWLEDKNVVALVSGGNVDLTRVSGVIEHGLNIADTSKGVVG.

59–60 (FT) contributes to the AMP binding site. Lys-64 is modified (N6-(pyridoxal phosphate)lysine). AMP is bound by residues Gln-94, 125–126 (GY), and Asn-321.

It belongs to the serine/threonine dehydratase family. As to quaternary structure, in the native structure, TdcB is in a dimeric form, whereas in the TdcB-AMP complex, it exists in a tetrameric form (dimer of dimers). Requires pyridoxal 5'-phosphate as cofactor.

The catalysed reaction is L-threonine = 2-oxobutanoate + NH4(+). The protein operates within amino-acid degradation; L-threonine degradation via propanoate pathway; propanoate from L-threonine: step 1/4. With respect to regulation, each protein molecule can bind up to four molecules of AMP, which act as an allosteric activator to the enzyme. Its function is as follows. Catalyzes the anaerobic formation of alpha-ketobutyrate and ammonia from threonine in a two-step reaction. The first step involved a dehydration of threonine and a production of enamine intermediates (aminocrotonate), which tautomerizes to its imine form (iminobutyrate). Both intermediates are unstable and short-lived. The second step is the nonenzymatic hydrolysis of the enamine/imine intermediates to form 2-ketobutyrate and free ammonia. In the low water environment of the cell, the second step is accelerated by RidA. The polypeptide is L-threonine dehydratase catabolic TdcB (tdcB) (Staphylococcus aureus (strain USA300)).